Reading from the N-terminus, the 288-residue chain is Ninja-family protein 6 (288 aa).

Disordered stretches follow at residues 1 to 50 (MASR…KRPR) and 66 to 207 (LHAD…TRTG). The segment covering 12–23 (AGEGAGPPGDAG) has biased composition (gly residues). The segment covering 76-86 (LPLLRTTSLPT) has biased composition (low complexity). The span at 91-103 (ERWRRREMQSRRR) shows a compositional bias: basic and acidic residues. Residues 131-173 (RRSNASQGSNSASTTEQGIGGSMFNQSADAKSPSTSDNRNQND) are compositionally biased toward polar residues. Residues 195 to 207 (RLRTLGSLTTRTG) are compositionally biased toward low complexity.

It belongs to the Ninja family.

It is found in the nucleus. This Zea mays (Maize) protein is Ninja-family protein 6.